The sequence spans 357 residues: Peptide chain release factor 1 (357 aa).

The residue at position 234 (Gln234) is an N5-methylglutamine. The span at 284–307 (KKQEQRSNDRKQQVGSGDRSERIR) shows a compositional bias: basic and acidic residues. The segment at 284–313 (KKQEQRSNDRKQQVGSGDRSERIRTYNFPQ) is disordered.

It belongs to the prokaryotic/mitochondrial release factor family. Methylated by PrmC. Methylation increases the termination efficiency of RF1.

It is found in the cytoplasm. Functionally, peptide chain release factor 1 directs the termination of translation in response to the peptide chain termination codons UAG and UAA. The protein is Peptide chain release factor 1 of Borrelia turicatae (strain 91E135).